A 142-amino-acid chain; its full sequence is MKTFTAKPETVKRDWFVVDAAGQTLGRLATEIASRLRGKHKPEYTPHVDTGDYIVVINAEQVRVTGAKASDKKYYSHSGFPGGIKEINFEKLIARAPERVIETAVKGMLPKNPLGRDMYRKLKVYKGAAHPHTAQQPQELKI.

This sequence belongs to the universal ribosomal protein uL13 family. As to quaternary structure, part of the 50S ribosomal subunit.

In terms of biological role, this protein is one of the early assembly proteins of the 50S ribosomal subunit, although it is not seen to bind rRNA by itself. It is important during the early stages of 50S assembly. This chain is Large ribosomal subunit protein uL13, found in Ectopseudomonas mendocina (strain ymp) (Pseudomonas mendocina).